The following is a 1045-amino-acid chain: Putative sodium-coupled neutral amino acid transporter 10 (1045 aa).

A run of 10 helical transmembrane segments spans residues 8–28 (LIMN…PFCF), 33–53 (ILLG…SCMF), 85–105 (SMIG…GDLG), 117–137 (VSEG…VLPL), 150–170 (FSAM…LSSF), 226–246 (IFAL…FFGY), 269–289 (MIRV…ILPC), 320–340 (ILTL…PNVE), 342–362 (ILGL…PALI), and 375–395 (FILG…LTVT). 3 stretches are compositionally biased toward basic and acidic residues: residues 412–453 (KEEK…EEQI), 460–479 (PQKE…RPDQ), and 503–546 (VDEK…DQAE). Disordered stretches follow at residues 412–584 (KEEK…EQPP) and 606–658 (EIAE…AEAG). The segment covering 564–573 (NDPNKQQLVN) has biased composition (polar residues). A compositionally biased stretch (basic and acidic residues) spans 627–658 (PIKDEKNEQIPGDPGKESHVEPKAEDNQAEAG).

The protein belongs to the amino acid/polyamine transporter 2 family.

The protein localises to the membrane. Functionally, putative sodium-dependent amino acid/proton antiporter. In Xenopus laevis (African clawed frog), this protein is Putative sodium-coupled neutral amino acid transporter 10 (slc38a10).